A 741-amino-acid chain; its full sequence is Catalase-peroxidase (741 aa).

The first 23 residues, 1–23 (MLKKIITALGMSGMLLASSNAIA), serve as a signal peptide directing secretion. The segment at residues 102-223 (WHDAGTYRIY…YAATQMGLIY (122 aa)) is a cross-link (tryptophyl-tyrosyl-methioninium (Trp-Tyr) (with M-249)). The active-site Proton acceptor is the H103. Residues 223-249 (YVNPEGPDGKPDIKGAASEIRQAFRAM) constitute a cross-link (tryptophyl-tyrosyl-methioninium (Tyr-Met) (with W-102)). H264 is a heme b binding site.

This sequence belongs to the peroxidase family. Peroxidase/catalase subfamily. As to quaternary structure, homodimer or homotetramer. It depends on heme b as a cofactor. In terms of processing, formation of the three residue Trp-Tyr-Met cross-link is important for the catalase, but not the peroxidase activity of the enzyme.

The catalysed reaction is H2O2 + AH2 = A + 2 H2O. It carries out the reaction 2 H2O2 = O2 + 2 H2O. Bifunctional enzyme with both catalase and broad-spectrum peroxidase activity. The protein is Catalase-peroxidase of Francisella tularensis subsp. holarctica (strain FTNF002-00 / FTA).